The chain runs to 52 residues: Insulin (52 aa).

Cystine bridges form between Cys7–Cys38, Cys19–Cys51, and Cys37–Cys42.

This sequence belongs to the insulin family. In terms of assembly, heterodimer of a B chain and an A chain linked by two disulfide bonds.

Its subcellular location is the secreted. In terms of biological role, insulin decreases blood glucose concentration. It increases cell permeability to monosaccharides, amino acids and fatty acids. It accelerates glycolysis, the pentose phosphate cycle, and glycogen synthesis in liver. In Polypterus senegalus (Senegal bichir), this protein is Insulin (ins).